A 323-amino-acid chain; its full sequence is Ferrochelatase (323 aa).

Residues H196 and E277 each coordinate Fe cation.

Belongs to the ferrochelatase family.

Its subcellular location is the cytoplasm. The catalysed reaction is heme b + 2 H(+) = protoporphyrin IX + Fe(2+). Its pathway is porphyrin-containing compound metabolism; protoheme biosynthesis; protoheme from protoporphyrin-IX: step 1/1. In terms of biological role, catalyzes the ferrous insertion into protoporphyrin IX. The sequence is that of Ferrochelatase from Haemophilus influenzae (strain PittEE).